The chain runs to 276 residues: Malectin-B (276 aa).

The N-terminal stretch at 1-26 is a signal peptide; that stretch reads MLSIRTVLGPLAAILLTVIGPFGAHG. Topologically, residues 27–253 are lumenal; sequence SGLADKVMWA…TPNPYASDNS (227 aa). 5 residues coordinate a carbohydrate: Tyr67, Tyr89, Tyr116, Phe117, and Asp186. Positions 202–249 are disordered; sequence DVPQLQPHPGLEKKEEEEEEEEEEGSPSKKQSNKNRVQSGPRTPNPYA. Acidic residues predominate over residues 216–226; it reads EEEEEEEEEEG. Polar residues predominate over residues 229–249; the sequence is SKKQSNKNRVQSGPRTPNPYA. The N-linked (GlcNAc...) asparagine glycan is linked to Asn252. A helical transmembrane segment spans residues 254-274; the sequence is SLMFPILVAFGVFIPTLFCLC. Topologically, residues 275–276 are cytoplasmic; it reads RL.

Belongs to the malectin family.

The protein resides in the endoplasmic reticulum membrane. In terms of biological role, carbohydrate-binding protein with a strong ligand preference for Glc2-N-glycan. May play a role in the early steps of protein N-glycosylation. Can bind di- or higher oligomers but not monomers of glucose, including maltose, maltotriose, maltotetraose, maltoheptaose, nigerose, kojibose, cellobiose and isomaltose, although based on their subcellular locations, these are unlikely to all be physiological ligands. The sequence is that of Malectin-B from Xenopus laevis (African clawed frog).